A 378-amino-acid chain; its full sequence is Probable methyltransferase At1g29790 (378 aa).

Residues 1–6 (MAGFTM) are Cytoplasmic-facing. A helical; Signal-anchor for type II membrane protein membrane pass occupies residues 7-29 (SLNLLLLVAMVATNILSLYHLSS). The Lumenal segment spans residues 30 to 378 (TTNFFQSTVK…TALLQKPVAR (349 aa)). The tract at residues 67–87 (TTHQPDKSTSTSTSRAAVSSS) is disordered. Residues 74 to 87 (STSTSTSRAAVSSS) show a composition bias toward low complexity. Asn247 is a glycosylation site (N-linked (GlcNAc...) asparagine).

It belongs to the methyltransferase superfamily.

It is found in the golgi apparatus membrane. The chain is Probable methyltransferase At1g29790 from Arabidopsis thaliana (Mouse-ear cress).